The primary structure comprises 190 residues: Transcription termination/antitermination protein NusG (190 aa).

Residues 138–166 (VGEIVTVTEGPFETFTGTVEEVDQEKARL) enclose the KOW domain.

Belongs to the NusG family.

Participates in transcription elongation, termination and antitermination. This is Transcription termination/antitermination protein NusG from Rickettsia bellii (strain RML369-C).